The chain runs to 276 residues: Large ribosomal subunit protein uL2 (276 aa).

The segment at 221–276 (RGSAMNPNDHPHGGGEGRAPIGRKSPMTPWGKKARGIKTRDRKKSSNELIIRRRTK) is disordered. Residues 252 to 263 (KKARGIKTRDRK) show a composition bias toward basic residues.

It belongs to the universal ribosomal protein uL2 family. As to quaternary structure, part of the 50S ribosomal subunit. Forms a bridge to the 30S subunit in the 70S ribosome.

In terms of biological role, one of the primary rRNA binding proteins. Required for association of the 30S and 50S subunits to form the 70S ribosome, for tRNA binding and peptide bond formation. It has been suggested to have peptidyltransferase activity; this is somewhat controversial. Makes several contacts with the 16S rRNA in the 70S ribosome. This Phytoplasma australiense protein is Large ribosomal subunit protein uL2.